A 317-amino-acid polypeptide reads, in one-letter code: mRNA 3'-end-processing protein yth-1 (317 aa).

The interval 1–20 (MATTTQTTTNSLPSGAGGPQ) is disordered. 5 C3H1-type zinc fingers span residues 51-78 (PADR…HVTA), 93-120 (GFGS…HEYN), 121-149 (LRKM…HIDP), 150-177 (LSRL…HFRR), and 179-202 (LCLY…HPRW). Positions 202 to 217 (WTADKDMEKPRAKGEG) are enriched in basic and acidic residues. The interval 202–317 (WTADKDMEKP…GRGGFRGKGH (116 aa)) is disordered. Over residues 223 to 237 (QQQQQQQQQQHMGDA) the composition is skewed to low complexity. Over residues 253–288 (YMDRERERDRDNREREMMMQGRDRDGGGHDRHKDRF) the composition is skewed to basic and acidic residues. The span at 289 to 301 (GGGGGGGGGGRGR) shows a compositional bias: gly residues. The segment covering 302–317 (GGWRGRGRGGFRGKGH) has biased composition (basic residues).

Belongs to the CPSF4/YTH1 family.

It is found in the nucleus. Functionally, component of the cleavage factor I (CF I) involved in pre-mRNA 3'-end processing. This is mRNA 3'-end-processing protein yth-1 (yth-1) from Neurospora crassa (strain ATCC 24698 / 74-OR23-1A / CBS 708.71 / DSM 1257 / FGSC 987).